A 412-amino-acid polypeptide reads, in one-letter code: MSPKKDAVSKPTPISVPVSRRSDIPGSLYVDTDMGFSGSPLPMPLDILQGNPIPPFLSKTFDLVDDPTLDPVISWGLTGASFVVWDPLEFARIILPRNFKHNNFSSFVRQLNTYGFRKIDTDKWEFANEAFLRGKKHLLKNIHRRRSPQSNQTCCSSTSQSQGSPTEVGGEIEKLRKERRALMEEMVELQQQSRGTARHVDTVNQRLKAAEQRQKQLLSFLAKLFQNRGFLERLKNFKGKEKGGALGLEKARKKFIKHHQQPQDSPTGGEVVKYEADDWERLLMYDEETENTKGLGGMTSSDPKGKNLMYPSEEEMSKPDYLMSFPSPEGLIKQEETTWSMGFDTTIPSFSNTDAWGNTMDYNDVSEFGFAAETTSDGLPDVCWEQFAAGITETGFNWPTGDDDDNTPMNDP.

The DNA-binding element occupies 53–147 (IPPFLSKTFD…LLKNIHRRRS (95 aa)). The interval 144–170 (RRRSPQSNQTCCSSTSQSQGSPTEVGG) is disordered. Residues 148 to 166 (PQSNQTCCSSTSQSQGSPT) are compositionally biased toward low complexity. Positions 159–225 (SQSQGSPTEV…QLLSFLAKLF (67 aa)) are hydrophobic repeat HR-A/B. A coiled-coil region spans residues 166-224 (TEVGGEIEKLRKERRALMEEMVELQQQSRGTARHVDTVNQRLKAAEQRQKQLLSFLAKL). The Bipartite nuclear localization signal signature appears at 238 to 254 (KGKEKGGALGLEKARKK). The AHA1 signature appears at 277–286 (DDWERLLMYD). The short motif at 381 to 390 (DVCWEQFAAG) is the AHA2 element.

This sequence belongs to the HSF family. Class A subfamily. In terms of assembly, homotrimer. Post-translationally, exhibits temperature-dependent phosphorylation.

The protein resides in the nucleus. Functionally, transcriptional activator that specifically binds DNA sequence 5'-AGAAnnTTCT-3' known as heat shock promoter elements (HSE). Involved in heat stress response. Activated by DREB2A under heat stress. The protein is Heat stress transcription factor A-3 (HSFA3) of Arabidopsis thaliana (Mouse-ear cress).